A 629-amino-acid polypeptide reads, in one-letter code: 1-deoxy-D-xylulose-5-phosphate synthase (629 aa).

Residues His-72 and 113–115 each bind thiamine diphosphate; that span reads GHA. Asp-144 is a Mg(2+) binding site. Residues 145–146, Asn-174, Tyr-287, and Glu-370 contribute to the thiamine diphosphate site; that span reads GA. Asn-174 is a Mg(2+) binding site.

This sequence belongs to the transketolase family. DXPS subfamily. As to quaternary structure, homodimer. Mg(2+) serves as cofactor. Thiamine diphosphate is required as a cofactor.

It catalyses the reaction D-glyceraldehyde 3-phosphate + pyruvate + H(+) = 1-deoxy-D-xylulose 5-phosphate + CO2. Its pathway is metabolic intermediate biosynthesis; 1-deoxy-D-xylulose 5-phosphate biosynthesis; 1-deoxy-D-xylulose 5-phosphate from D-glyceraldehyde 3-phosphate and pyruvate: step 1/1. Catalyzes the acyloin condensation reaction between C atoms 2 and 3 of pyruvate and glyceraldehyde 3-phosphate to yield 1-deoxy-D-xylulose-5-phosphate (DXP). The chain is 1-deoxy-D-xylulose-5-phosphate synthase from Prochlorococcus marinus (strain MIT 9301).